The primary structure comprises 287 residues: Putative holocytochrome-c1 synthase (287 aa).

Polar residues predominate over residues 1–12 (MRGFGSDSSQAS). Disordered regions lie at residues 1 to 63 (MRGF…QPSS) and 81 to 100 (QSQSANSTQQAQPPKLSAPL). Low complexity-rich tracts occupy residues 31 to 63 (QARAAQSASTSAAPALPQSVQVAPASQPSQPSS) and 81 to 92 (QSQSANSTQQAQ).

Belongs to the cytochrome c-type heme lyase family.

The protein localises to the mitochondrion inner membrane. It carries out the reaction holo-[cytochrome c] = apo-[cytochrome c] + heme b. Probable lyase that catalyzes the covalent linking of the heme group to the cytochrome C apoprotein to produce the mature functional cytochrome. The sequence is that of Putative holocytochrome-c1 synthase from Chaetomium thermophilum (strain DSM 1495 / CBS 144.50 / IMI 039719) (Thermochaetoides thermophila).